Reading from the N-terminus, the 54-residue chain is Potassium channel toxin alpha-KTx 14.x (54 aa).

A signal peptide spans 1-23; that stretch reads MKIFFAILLILAVCSMAIWTVNG. 3 disulfide bridges follow: C30–C46, C36–C51, and C40–C53.

It belongs to the short scorpion toxin superfamily. Potassium channel inhibitor family. Alpha-KTx 14 subfamily. Expressed by the venom gland.

The protein resides in the secreted. Potassium channels inhibitor. The polypeptide is Potassium channel toxin alpha-KTx 14.x (Olivierus martensii (Manchurian scorpion)).